A 269-amino-acid chain; its full sequence is Rhamnulose-1-phosphate aldolase (269 aa).

The active site involves Glu119. Zn(2+) contacts are provided by His142, His144, and His214.

The protein belongs to the aldolase class II family. RhaD subfamily. It depends on Zn(2+) as a cofactor.

The protein resides in the cytoplasm. It carries out the reaction L-rhamnulose 1-phosphate = (S)-lactaldehyde + dihydroxyacetone phosphate. It participates in carbohydrate degradation; L-rhamnose degradation; glycerone phosphate from L-rhamnose: step 3/3. Its function is as follows. Catalyzes the reversible cleavage of L-rhamnulose-1-phosphate to dihydroxyacetone phosphate (DHAP) and L-lactaldehyde. This Bacteroides thetaiotaomicron (strain ATCC 29148 / DSM 2079 / JCM 5827 / CCUG 10774 / NCTC 10582 / VPI-5482 / E50) protein is Rhamnulose-1-phosphate aldolase.